Consider the following 498-residue polypeptide: DNA primase (498 aa).

The CHC2-type zinc finger occupies 35–59 (CPFHPDDTPSFYVSPSKQIFKCFGC). Residues 243–324 (GFAILVEGYF…EVYPVYLPEG (82 aa)) enclose the Toprim domain. 3 residues coordinate Mg(2+): Glu-249, Asp-293, and Asp-295.

Belongs to the DnaG primase family. Monomer. Interacts with DnaB. The cofactor is Zn(2+). Requires Mg(2+) as cofactor.

The enzyme catalyses ssDNA + n NTP = ssDNA/pppN(pN)n-1 hybrid + (n-1) diphosphate.. Its function is as follows. RNA polymerase that catalyzes the synthesis of short RNA molecules used as primers for DNA polymerase during DNA replication. The chain is DNA primase from Aquifex aeolicus (strain VF5).